The primary structure comprises 311 residues: Malate dehydrogenase (311 aa).

NAD(+)-binding positions include 7 to 13 (GAAGGIG) and aspartate 34. Positions 81 and 87 each coordinate substrate. NAD(+)-binding positions include asparagine 94 and 117-119 (ITN). Residues asparagine 119 and arginine 153 each contribute to the substrate site. The active-site Proton acceptor is the histidine 177. Methionine 227 lines the NAD(+) pocket.

The protein belongs to the LDH/MDH superfamily. MDH type 1 family. In terms of assembly, homodimer.

The catalysed reaction is (S)-malate + NAD(+) = oxaloacetate + NADH + H(+). Catalyzes the reversible oxidation of malate to oxaloacetate. The protein is Malate dehydrogenase of Colwellia psychrerythraea (strain 34H / ATCC BAA-681) (Vibrio psychroerythus).